The chain runs to 234 residues: Small ribosomal subunit protein uS3 (234 aa).

Residues 17–86 (VEKFLTKELK…SPQVEVQQVQ (70 aa)) enclose the KH type-2 domain.

This sequence belongs to the universal ribosomal protein uS3 family. In terms of assembly, part of the 30S ribosomal subunit.

Its function is as follows. Binds the lower part of the 30S subunit head. The polypeptide is Small ribosomal subunit protein uS3 (Methanoculleus marisnigri (strain ATCC 35101 / DSM 1498 / JR1)).